The chain runs to 79 residues: Acyl carrier protein (79 aa).

A Carrier domain is found at E4–L79. An O-(pantetheine 4'-phosphoryl)serine modification is found at S39.

This sequence belongs to the acyl carrier protein (ACP) family. 4'-phosphopantetheine is transferred from CoA to a specific serine of apo-ACP by AcpS. This modification is essential for activity because fatty acids are bound in thioester linkage to the sulfhydryl of the prosthetic group.

Its subcellular location is the cytoplasm. It participates in lipid metabolism; fatty acid biosynthesis. Carrier of the growing fatty acid chain in fatty acid biosynthesis. The polypeptide is Acyl carrier protein (Exiguobacterium sp. (strain ATCC BAA-1283 / AT1b)).